Consider the following 449-residue polypeptide: MTSFYSTSSCPLGCTMAPGARNVFVSPIDVGCQPVAEANAASMCLLANVAHANRVRVGSTPLGRPSLCLPPTSHTACPLPGTCHIPGNIGICGAYGKNTLNGHEKETMKFLNDRLANYLEKVRQLEQENAELETTLLERSKCHESTVCPDYQSYFRTIEELQQKILCSKAENARLIVQIDNAKLAADDFRIKLESERSLHQLVEADKCGTQKLLDDATLAKADLEAQQESLKEEQLSLKSNHEQEVKILRSQLGEKFRIELDIEPTIDLNRVLGEMRAQYEAMVETNHQDVEQWFQAQSEGISLQAMSCSEELQCCQSEILELRCTVNALEVERQAQHTLKDCLQNSLCEAEDRYGTELAQMQSLISNLEEQLSEIRADLERQNQEYQVLLDVKARLENEIATYRNLLESEDCKLPCNPCSTPASCTSCPSCGPVTGGSPSGHGASMGR.

The interval 1 to 104 (MTSFYSTSSC…YGKNTLNGHE (104 aa)) is head. In terms of domain architecture, IF rod spans 104–415 (EKETMKFLND…NLLESEDCKL (312 aa)). The interval 105-139 (KETMKFLNDRLANYLEKVRQLEQENAELETTLLER) is coil 1A. Positions 140 to 150 (SKCHESTVCPD) are linker 1. Residues 151-251 (YQSYFRTIEE…HEQEVKILRS (101 aa)) form a coil 1B region. The linker 12 stretch occupies residues 252–267 (QLGEKFRIELDIEPTI). A coil 2 region spans residues 268–411 (DLNRVLGEMR…ATYRNLLESE (144 aa)). Positions 416 to 449 (PCNPCSTPASCTSCPSCGPVTGGSPSGHGASMGR) are tail.

This sequence belongs to the intermediate filament family.

The sequence is that of Keratin, type I cuticular Ha7 (KRT37) from Homo sapiens (Human).